The sequence spans 327 residues: Interleukin-12 subunit beta (327 aa).

Residues 1–22 form the signal peptide; that stretch reads MHPQQLVVSWFSLVLLASPIVA. Residues 23–106 form the Ig-like C2-type domain; it reads IWELEKNVYI…LSRSLLLLHK (84 aa). A disulfide bond links Cys50 and Cys90. An N-linked (GlcNAc...) asparagine glycan is attached at Asn223. The region spanning 238–327 is the Fibronectin type-III domain; it reads PPKNLQLRPL…WSEWASVSCS (90 aa).

This sequence belongs to the IL-12B family. In terms of assembly, heterodimer with IL12A; disulfide-linked. The heterodimer is known as interleukin IL-12. Heterodimer with IL23A; disulfide-linked. The heterodimer is known as interleukin IL-23. Also secreted as a monomer. Interacts with NBR1; this interaction promotes IL-12 secretion.

It localises to the secreted. Functionally, cytokine that can act as a growth factor for activated T and NK cells, enhance the lytic activity of NK/lymphokine-activated killer cells, and stimulate the production of IFN-gamma by resting PBMC. This chain is Interleukin-12 subunit beta (IL12B), found in Bubalus carabanensis (Swamp type water buffalo).